Reading from the N-terminus, the 248-residue chain is ATP synthase subunit a, chloroplastic (248 aa).

A run of 5 helical transmembrane segments spans residues 35 to 55 (GQVF…AIAG), 94 to 114 (IPYI…GALI), 133 to 153 (INTT…AGLS), 202 to 222 (VFTL…GLFA), and 224 to 244 (SIQA…ALEG).

The protein belongs to the ATPase A chain family. As to quaternary structure, F-type ATPases have 2 components, CF(1) - the catalytic core - and CF(0) - the membrane proton channel. CF(1) has five subunits: alpha(3), beta(3), gamma(1), delta(1), epsilon(1). CF(0) has four main subunits: a, b, b' and c.

It localises to the plastid. The protein localises to the chloroplast thylakoid membrane. Key component of the proton channel; it plays a direct role in the translocation of protons across the membrane. The sequence is that of ATP synthase subunit a, chloroplastic from Antithamnion sp. (Red alga).